We begin with the raw amino-acid sequence, 357 residues long: Chorismate synthase (357 aa).

Positions 38–49 (EKDIQPDLDRRK) are enriched in basic and acidic residues. The segment at 38–60 (EKDIQPDLDRRKPGTSRYTTPRR) is disordered. The NADP(+) site is built by R48 and R54. FMN is bound by residues 125–127 (RSS), 243–244 (NA), G283, 298–302 (KPTSS), and R324.

Belongs to the chorismate synthase family. In terms of assembly, homotetramer. FMNH2 is required as a cofactor.

The catalysed reaction is 5-O-(1-carboxyvinyl)-3-phosphoshikimate = chorismate + phosphate. It participates in metabolic intermediate biosynthesis; chorismate biosynthesis; chorismate from D-erythrose 4-phosphate and phosphoenolpyruvate: step 7/7. In terms of biological role, catalyzes the anti-1,4-elimination of the C-3 phosphate and the C-6 proR hydrogen from 5-enolpyruvylshikimate-3-phosphate (EPSP) to yield chorismate, which is the branch point compound that serves as the starting substrate for the three terminal pathways of aromatic amino acid biosynthesis. This reaction introduces a second double bond into the aromatic ring system. The sequence is that of Chorismate synthase from Haemophilus influenzae (strain PittGG).